We begin with the raw amino-acid sequence, 649 residues long: Exoribonuclease 2 (649 aa).

In terms of domain architecture, RNB spans 190-517; it reads RKDLTDLDFI…NHRLLKSIIK (328 aa). In terms of domain architecture, S1 motif spans 562–644; that stretch reads NQKFNAEITD…KTRSIIAKPV (83 aa).

The protein belongs to the RNR ribonuclease family. RNase II subfamily.

The protein localises to the cytoplasm. It carries out the reaction Exonucleolytic cleavage in the 3'- to 5'-direction to yield nucleoside 5'-phosphates.. Involved in mRNA degradation. Hydrolyzes single-stranded polyribonucleotides processively in the 3' to 5' direction. This is Exoribonuclease 2 from Buchnera aphidicola subsp. Acyrthosiphon pisum (strain 5A).